Consider the following 375-residue polypeptide: Chaperone protein DnaJ (375 aa).

The J domain occupies 5–70; sequence DYYEILGISK…EKRAAYDQYG (66 aa). The CR-type zinc-finger motif lies at 130-208; that stretch reads GIIKEICIPT…CHGNGRVERS (79 aa). Residues C143, C146, C160, C163, C182, C185, C196, and C199 each contribute to the Zn(2+) site. CXXCXGXG motif repeat units follow at residues 143–150, 160–167, 182–189, and 196–203; these read CEKCRGTG, CMTCHGQG, CPTCHGHG, and CNKCHGNG.

It belongs to the DnaJ family. As to quaternary structure, homodimer. It depends on Zn(2+) as a cofactor.

It localises to the cytoplasm. Its function is as follows. Participates actively in the response to hyperosmotic and heat shock by preventing the aggregation of stress-denatured proteins and by disaggregating proteins, also in an autonomous, DnaK-independent fashion. Unfolded proteins bind initially to DnaJ; upon interaction with the DnaJ-bound protein, DnaK hydrolyzes its bound ATP, resulting in the formation of a stable complex. GrpE releases ADP from DnaK; ATP binding to DnaK triggers the release of the substrate protein, thus completing the reaction cycle. Several rounds of ATP-dependent interactions between DnaJ, DnaK and GrpE are required for fully efficient folding. Also involved, together with DnaK and GrpE, in the DNA replication of plasmids through activation of initiation proteins. This Blochmanniella pennsylvanica (strain BPEN) protein is Chaperone protein DnaJ.